Reading from the N-terminus, the 291-residue chain is Lys-63-specific deubiquitinase BRCC36-like (291 aa).

The MPN domain maps to 12–179 (VYLESDAFLV…YTCFQSVQAS (168 aa)). Residues H122, H124, and D135 each contribute to the Zn(2+) site. A JAMM motif motif is present at residues 122 to 135 (HSHPHITVWPSHVD). Residues 259–286 (LQWLEDRLEQNQQRLQELEQEKEDLMEE) are a coiled coil.

Belongs to the peptidase M67A family. BRCC36 subfamily.

Its function is as follows. Metalloprotease that specifically cleaves 'Lys-63'-linked polyubiquitin chains. The chain is Lys-63-specific deubiquitinase BRCC36-like from Mus musculus (Mouse).